A 141-amino-acid chain; its full sequence is Lutropin subunit beta (141 aa).

Positions 1-21 (MERYQELTVLLLLLLLEGGSG) are cleaved as a signal peptide. Cystine bridges form between Cys30-Cys78, Cys44-Cys93, Cys47-Cys131, Cys55-Cys109, Cys59-Cys111, and Cys114-Cys121. Residue Asn34 is glycosylated (N-linked (GlcNAc...) asparagine).

The protein belongs to the glycoprotein hormones subunit beta family. In terms of assembly, heterodimer of a common alpha chain and a unique beta chain which confers biological specificity to thyrotropin, lutropin, follitropin and gonadotropin.

Its subcellular location is the secreted. Its function is as follows. Promotes spermatogenesis and ovulation by stimulating the testes and ovaries to synthesize steroids. This chain is Lutropin subunit beta (LHB), found in Monodelphis domestica (Gray short-tailed opossum).